Here is a 241-residue protein sequence, read N- to C-terminus: Probable transcriptional regulatory protein NE0210 (241 aa).

This sequence belongs to the TACO1 family.

Its subcellular location is the cytoplasm. The chain is Probable transcriptional regulatory protein NE0210 from Nitrosomonas europaea (strain ATCC 19718 / CIP 103999 / KCTC 2705 / NBRC 14298).